Reading from the N-terminus, the 436-residue chain is UPF0597 protein YhaM (436 aa).

Belongs to the UPF0597 family.

In Salmonella heidelberg (strain SL476), this protein is UPF0597 protein YhaM.